Reading from the N-terminus, the 399-residue chain is Transaminase BacF (399 aa).

Residues Gly103–Lys104, Tyr128, Asn178, Tyr209, and Ser236–Ser238 each bind pyridoxal 5'-phosphate. Residue Lys239 is modified to N6-(pyridoxal phosphate)lysine. Arg247 lines the pyridoxal 5'-phosphate pocket.

It belongs to the class-I pyridoxal-phosphate-dependent aminotransferase family. Homodimer. Pyridoxal 5'-phosphate is required as a cofactor.

Its subcellular location is the cytoplasm. The protein operates within antibiotic biosynthesis; bacilysin biosynthesis. In terms of biological role, part of the bacABCDEF operon responsible for the biosynthesis of the nonribosomally synthesized dipeptide antibiotic bacilysin, composed of L-alanine and L-anticapsin. Bacilysin is an irreversible inactivator of the glutaminase domain of glucosamine synthetase. Catalyzes the reductive amination of the C2 ketone of tetrahydro-hydroxyphenylpyruvate (H4HPP), with L-Phe as an amino donor, to yield tetrahydrotyrosine (H4Tyr) diastereomer. D-Phe is not an effective amino donor. BacF associated to BacG converts 3E,7R- and 3Z,7R-ex-H2HPP to 2S,4R,7R- and 2S,4S,7R-H4Tyr, respectively. Given that bacilysin has the 2S,4S stereochemistry in its anticapsin moiety, it is likely that the 2S,4S-H4Tyr is the diastereomer used for the biosynthesis. This chain is Transaminase BacF, found in Bacillus subtilis (strain 168).